A 201-amino-acid chain; its full sequence is 3-isopropylmalate dehydratase small subunit (201 aa).

This sequence belongs to the LeuD family. LeuD type 1 subfamily. Heterodimer of LeuC and LeuD.

The catalysed reaction is (2R,3S)-3-isopropylmalate = (2S)-2-isopropylmalate. The protein operates within amino-acid biosynthesis; L-leucine biosynthesis; L-leucine from 3-methyl-2-oxobutanoate: step 2/4. Catalyzes the isomerization between 2-isopropylmalate and 3-isopropylmalate, via the formation of 2-isopropylmaleate. This chain is 3-isopropylmalate dehydratase small subunit, found in Glaesserella parasuis serovar 5 (strain SH0165) (Haemophilus parasuis).